We begin with the raw amino-acid sequence, 160 residues long: Epithelial membrane protein 1 (160 aa).

The chain crosses the membrane as a helical span at residues 1–21; it reads MLVLLAAIFVVHIATCVMLFV. N-linked (GlcNAc...) asparagine glycans are attached at residues asparagine 35 and asparagine 43. Helical transmembrane passes span 67 to 87, 95 to 115, and 137 to 157; these read FMILSIIFSVISLIIFVFQLF, FFLSGATMLVCWLCVLIGASI, and FILAWICFCFSFVVGVLYLVL.

Belongs to the PMP-22/EMP/MP20 family. As to expression, most abundant in squamous epithelia.

The protein localises to the membrane. This is Epithelial membrane protein 1 (EMP1) from Oryctolagus cuniculus (Rabbit).